The primary structure comprises 653 residues: DNA-directed RNA polymerase III subunit RPC-3 (653 aa).

3 disordered regions span residues 141–186 (INGV…DSDP), 280–309 (DSSAPRKRLKLDGPLEDDVKDEDDGDDFSD), and 422–442 (IKEDEDDEDEEGGPVSMKRRG). Over residues 159 to 170 (AENHTDHAHDYQ) the composition is skewed to basic and acidic residues. Composition is skewed to acidic residues over residues 293–309 (PLEDDVKDEDDGDDFSD) and 424–433 (EDEDDEDEEG). Positions 580–601 (TYKSMSRCLQRIRVEREKLKFL) are leucine-zipper.

It belongs to the RNA polymerase beta chain family. In terms of assembly, component of the RNA polymerase III (Pol III) complex consisting of 17 subunits.

It localises to the nucleus. Its function is as follows. DNA-dependent RNA polymerase catalyzes the transcription of DNA into RNA using the four ribonucleoside triphosphates as substrates. Specific core component of RNA polymerase III which synthesizes small RNAs, such as 5S rRNA and tRNAs. The protein is DNA-directed RNA polymerase III subunit RPC-3 (RPC-82) of Coccidioides immitis (strain RS) (Valley fever fungus).